Here is a 172-residue protein sequence, read N- to C-terminus: 3-hydroxydecanoyl-[acyl-carrier-protein] dehydratase (172 aa).

H71 is an active-site residue.

This sequence belongs to the thioester dehydratase family. FabA subfamily. Homodimer.

The protein localises to the cytoplasm. The enzyme catalyses a (3R)-hydroxyacyl-[ACP] = a (2E)-enoyl-[ACP] + H2O. It carries out the reaction (3R)-hydroxydecanoyl-[ACP] = (2E)-decenoyl-[ACP] + H2O. The catalysed reaction is (2E)-decenoyl-[ACP] = (3Z)-decenoyl-[ACP]. It participates in lipid metabolism; fatty acid biosynthesis. Its function is as follows. Necessary for the introduction of cis unsaturation into fatty acids. Catalyzes the dehydration of (3R)-3-hydroxydecanoyl-ACP to E-(2)-decenoyl-ACP and then its isomerization to Z-(3)-decenoyl-ACP. Can catalyze the dehydratase reaction for beta-hydroxyacyl-ACPs with saturated chain lengths up to 16:0, being most active on intermediate chain length. This chain is 3-hydroxydecanoyl-[acyl-carrier-protein] dehydratase, found in Aliivibrio fischeri (strain ATCC 700601 / ES114) (Vibrio fischeri).